The sequence spans 491 residues: Nickel-binding protein NikA (491 aa).

An N-terminal signal peptide occupies residues 1–18 (MKFKRLATIFSAVLVLSG). The N-palmitoyl cysteine moiety is linked to residue Cys19. Residue Cys19 is the site of S-diacylglycerol cysteine attachment.

The protein belongs to the bacterial solute-binding protein 5 family. As to quaternary structure, the complex is composed of two ATP-binding proteins (NikD and NikE), two transmembrane proteins (NikB and NikC) and a solute-binding protein (NikA).

Its subcellular location is the cell membrane. Functionally, part of the ABC transporter complex NikABCDE (Opp2) involved in nickel import. Binds nickel and transfers it to the membrane-bound permease. Required for full urease activity and plays a significant role in the virulence of S.aureus during urinary tract infection (UTI). May bind nickel via a nickel-chelator. This chain is Nickel-binding protein NikA, found in Staphylococcus aureus (strain NCTC 8325 / PS 47).